The primary structure comprises 323 residues: MNASCCLPSVQPTLPNGSEHLQAPFFSNQSSSAFCEQVFIKPEVFLSLGIVSLLENILVILAVVRNGNLHSPMYFFLCSLAVADMLVSVSNALETIMIAIVHSDYLTFEDQFIQHMDNIFDSMICISLVASICNLLAIAVDRYVTIFYALRYHSIMTVRKALTLIVAIWVCCGVCGVVFIVYSESKMVIVCLITMFFAMMLLMGTLYVHMFLFARLHVKRIAALPPADGVAPQQHSCMKGAVTITILLGVFIFCWAPFFLHLVLIITCPTNPYCICYTAHFNTYLVLIMCNSVIDPLIYAFRSLELRNTFREILCGCNGMNLG.

At 1–37 (MNASCCLPSVQPTLPNGSEHLQAPFFSNQSSSAFCEQ) the chain is on the extracellular side. Asparagine 2, asparagine 16, and asparagine 28 each carry an N-linked (GlcNAc...) asparagine glycan. Residues 38 to 63 (VFIKPEVFLSLGIVSLLENILVILAV) traverse the membrane as a helical segment. The Cytoplasmic segment spans residues 64-75 (VRNGNLHSPMYF). The chain crosses the membrane as a helical span at residues 76-100 (FLCSLAVADMLVSVSNALETIMIAI). The Extracellular portion of the chain corresponds to 101–118 (VHSDYLTFEDQFIQHMDN). A helical membrane pass occupies residues 119–140 (IFDSMICISLVASICNLLAIAV). Residues 141-160 (DRYVTIFYALRYHSIMTVRK) lie on the Cytoplasmic side of the membrane. The chain crosses the membrane as a helical span at residues 161–181 (ALTLIVAIWVCCGVCGVVFIV). The Extracellular segment spans residues 182 to 186 (YSESK). Residues 187 to 210 (MVIVCLITMFFAMMLLMGTLYVHM) traverse the membrane as a helical segment. Topologically, residues 211 to 245 (FLFARLHVKRIAALPPADGVAPQQHSCMKGAVTIT) are cytoplasmic. The chain crosses the membrane as a helical span at residues 246 to 268 (ILLGVFIFCWAPFFLHLVLIITC). Over 269-277 (PTNPYCICY) the chain is Extracellular. The helical transmembrane segment at 278 to 301 (TAHFNTYLVLIMCNSVIDPLIYAF) threads the bilayer. Residues 302 to 323 (RSLELRNTFREILCGCNGMNLG) lie on the Cytoplasmic side of the membrane. Cysteine 315 carries the S-palmitoyl cysteine lipid modification.

It belongs to the G-protein coupled receptor 1 family. Brain, placental, and gut tissues.

It localises to the cell membrane. Receptor for MSH (alpha, beta and gamma) and ACTH. This receptor is mediated by G proteins which activate adenylate cyclase. Required for expression of anticipatory patterns of activity and wakefulness during periods of limited nutrient availability and for the normal regulation of circadian clock activity in the brain. In Homo sapiens (Human), this protein is Melanocortin receptor 3 (MC3R).